Here is a 258-residue protein sequence, read N- to C-terminus: MNGYSVFCVSDHTGLTIEAVAKSVLAQFPRIEFSLITLPFIDDAAKARAAAGRVAVTARALVFSSLTDPALRAHFKDAGLHVFDLFEHVSPAVERVLGEPATPSGGHTHGMASDYEARMDAVNFALRLDDGLSPEHLGQADLILVGVSRVGKTPTALYLALHYGLRAANYPLTPDDLANDGLPRALQPHLPRLRGLTLAPERLAAIREARLPGSRYASVAQCRSELDAAERLLAAHAIPLIDTSRMSVEEIAARLRAS.

146 to 153 (GVSRVGKT) provides a ligand contact to ADP.

Belongs to the pyruvate, phosphate/water dikinase regulatory protein family. PSRP subfamily.

The catalysed reaction is [pyruvate, water dikinase] + ADP = [pyruvate, water dikinase]-phosphate + AMP + H(+). It catalyses the reaction [pyruvate, water dikinase]-phosphate + phosphate + H(+) = [pyruvate, water dikinase] + diphosphate. Its function is as follows. Bifunctional serine/threonine kinase and phosphorylase involved in the regulation of the phosphoenolpyruvate synthase (PEPS) by catalyzing its phosphorylation/dephosphorylation. The protein is Putative phosphoenolpyruvate synthase regulatory protein of Thiobacillus denitrificans (strain ATCC 25259 / T1).